The sequence spans 787 residues: Lysine-specific demethylase JMJ13 (787 aa).

In terms of domain architecture, JmjN spans 103–144 (CPVYRPTKEEFEDPLTYLQKIFPEASKYGICKIVSPLTATVP). One can recognise a JmjC domain in the interval 250–420 (SSKWNLNKVS…FGAIASCRYA (171 aa)). Residues H293, E295, and H388 each coordinate Fe cation. Residues C500, C503, C514, C516, H519, C522, H525, and C534 each contribute to the Zn(2+) site. A C4HCHC zinc finger spans residues 500 to 551 (CSLCKRDCYLAFINCECYSHPVCLRHDVKKLDLPCGTTHTLYLRDNIEDMEA). The C5HC2 zinc-finger motif lies at 500-551 (CSLCKRDCYLAFINCECYSHPVCLRHDVKKLDLPCGTTHTLYLRDNIEDMEA). The FYR N-terminal domain maps to 617 to 675 (VMSYEANASCISSVADDYECSDYVNRRANCSSSSDSKLSEEVACSSSKKTRFFPVVQDE). The FYR C-terminal domain maps to 677 to 756 (LVADQESDGS…ELVISNRKET (80 aa)). The disordered stretch occupies residues 712–769 (ESDHHQELKRLKKSHHHEGRYSSSSSVSRQEEEEDELVISNRKETQQQSDVKMQKKRI). The short motif at 752–759 (NRKETQQQ) is the Nuclear localization signal element.

Belongs to the JARID1 histone demethylase family. The cofactor is Fe(2+). Mostly expressed in leaves, and, to a lower extent, in inflorescences, roots, siliques and stems.

Its subcellular location is the nucleus. The enzyme catalyses N(6),N(6),N(6)-trimethyl-L-lysyl(27)-[histone H3] + 2-oxoglutarate + O2 = N(6),N(6)-dimethyl-L-lysyl(27)-[histone H3] + formaldehyde + succinate + CO2. Functionally, histone demethylase that demethylates 'Lys-27' (H3K27me) of histone H3 with a specific activity for H3K27me3 and involved in the regulation of gene expression. Acts as a temperature and photoperiod dependent flowering repressor. This Arabidopsis thaliana (Mouse-ear cress) protein is Lysine-specific demethylase JMJ13.